A 194-amino-acid polypeptide reads, in one-letter code: Peptidyl-tRNA hydrolase (194 aa).

A tRNA-binding site is contributed by tyrosine 17. Histidine 22 acts as the Proton acceptor in catalysis. TRNA-binding residues include phenylalanine 68, asparagine 70, and asparagine 116.

Belongs to the PTH family. In terms of assembly, monomer.

It localises to the cytoplasm. The enzyme catalyses an N-acyl-L-alpha-aminoacyl-tRNA + H2O = an N-acyl-L-amino acid + a tRNA + H(+). In terms of biological role, hydrolyzes ribosome-free peptidyl-tRNAs (with 1 or more amino acids incorporated), which drop off the ribosome during protein synthesis, or as a result of ribosome stalling. Functionally, catalyzes the release of premature peptidyl moieties from peptidyl-tRNA molecules trapped in stalled 50S ribosomal subunits, and thus maintains levels of free tRNAs and 50S ribosomes. In Histophilus somni (strain 129Pt) (Haemophilus somnus), this protein is Peptidyl-tRNA hydrolase.